The following is a 549-amino-acid chain: Protein wntless homolog (549 aa).

The first 34 residues, 1–34 (MAGGAVIENLSNRKLFVIFAGLLVIQIMFFLIGA), serve as a signal peptide directing secretion. Over 36-236 (YAPSPSSYME…RLIEIHQNGG (201 aa)) the chain is Lumenal. A helical transmembrane segment spans residues 237–257 (FTLVWLWTKTFMTPVVAICLW). Topologically, residues 258–275 (WYYNRINQLARNPLLLER) are cytoplasmic. Residues 276 to 296 (AILLLGLSLVILDFPIEWISL) traverse the membrane as a helical segment. Topologically, residues 297 to 310 (TYRIPFLLLISDLR) are lumenal. The chain crosses the membrane as a helical span at residues 311-331 (QGLFYTVLFSFWLIFAGEHLI). At 332–345 (DDNTRNNLKSYRFN) the chain is on the cytoplasmic side. The helical transmembrane segment at 346–366 (LSFIITASLGLLIYDLIERGI) threads the bilayer. The Lumenal segment spans residues 367 to 383 (QLYDPFYSVWSSPTGSQ). A helical transmembrane segment spans residues 384–404 (IAYFAIFISAISTVAYFIFLF). Topologically, residues 405–439 (FKIARVWSTIKSKRSAQIYQTSENRRLKVEGVIYR) are cytoplasmic. A helical transmembrane segment spans residues 440 to 460 (FKFLMLFTLLCSAFTIAAYFM). The Lumenal portion of the chain corresponds to 461 to 483 (KQYGEAQLHGDEARDGFLTGSTS). A helical transmembrane segment spans residues 484-504 (AFFTGAFGMCNIYVLLLLAMY). The Cytoplasmic portion of the chain corresponds to 505 to 549 (APSHKHYRGASQLIDENDDDEIMEDPSNQHTESNAMTTFLKPSTD). The disordered stretch occupies residues 524–549 (DEIMEDPSNQHTESNAMTTFLKPSTD). Residues 530–549 (PSNQHTESNAMTTFLKPSTD) are compositionally biased toward polar residues.

This sequence belongs to the wntless family. In terms of tissue distribution, expressed in the tail hypodermis, stomatointestinal muscle, the mesoblast cell M and its descendants, CAN neurons, the developing vulva, the pharynx and the pharyngeal intestinal valve.

Its subcellular location is the cell membrane. The protein resides in the early endosome membrane. It is found in the golgi apparatus membrane. It localises to the basal cell membrane. The protein localises to the late endosome membrane. Its function is as follows. Probable sorting receptor which regulates endocytosis and secretion of the wnt ligand egl-20. Recycling of mig-14 from the plasma membrane to the Golgi apparatus by the retromer complex is essential for its function. Its endosomal trafficking is regulated by its association with sorting nexin snx-3 on early endosomes and the mtm-6/mtm-9 myotubularin complex. Required in embryonic development for endoderm specification and the correct positioning and orientation of the mitotic spindles and division planes in blastomere cells. Functions during vulval development, playing a role in vulval precursor cell fate specification. During development, specifically regulates the migration of HSN neurons, the left Q neuroblast (QL) and its descendants and the distal tip cells of the gonads. Positioning of Q neuroblasts may be both dependent and independent of hox gene mab-5. Involved in establishing ALM and PLM neuronal cell polarity. This chain is Protein wntless homolog, found in Caenorhabditis elegans.